Reading from the N-terminus, the 358-residue chain is MFRKKMLVLALFSIYFLSIEAVRNESFPALLAFGDSMVDTGNNNYLLTLMKGNYWPYGWNFDSKIPTGRFGNGRVFSDVVGIILKSSLQCFFVISAEGLGIKRIVPAYRKLYIAPSDLKTGVSFASGGAGVDPVTSKLLRVLSPADQVKDFKGYKRKLKGVVGRSKAKKIVANSVILVSEGNNDIGITYAIHDAGMRLMTPKVYTSKLVGWNKKFIKDLYDHGARKFAVMGVIPLGCLPMSRLIFGGFFVWCNFLANTISEDYNKKLKSGIKSWRGASDFRGARFVYVDMYNSLMDVINNHRKYGFTHEKNGCCCMLTAIVPCSNPDKYVFYDFAHPSEKAYKTIAKKLVEDIKTGLA.

The signal sequence occupies residues 1–21 (MFRKKMLVLALFSIYFLSIEA). Asn-24 is a glycosylation site (N-linked (GlcNAc...) asparagine). The Nucleophile role is filled by Ser-36. Catalysis depends on residues Asp-333 and His-336.

The protein belongs to the 'GDSL' lipolytic enzyme family. Flower buds.

The protein resides in the secreted. In Arabidopsis thaliana (Mouse-ear cress), this protein is GDSL esterase/lipase EXL5 (EXL5).